We begin with the raw amino-acid sequence, 126 residues long: uncharacterized protein (126 aa).

Residues 1 to 9 (MCTYIITQS) are Extracellular-facing. The chain crosses the membrane as a helical span at residues 10–30 (FFFLPCLSFLFFKLVGFFDSV). At 31 to 73 (FTAGKSLRIMFELPIFDKLTSCFAAIDCSATSLDIPFAEEELF) the chain is on the cytoplasmic side. The helical transmembrane segment at 74-94 (LMLVSEPVLIPFLFVFEFMLI) threads the bilayer. The Extracellular portion of the chain corresponds to 95-126 (CKPCGSRSRFGFPVKNVSDFEETLEFDPTLLV).

The protein resides in the membrane. This is an uncharacterized protein from Saccharomyces cerevisiae (strain ATCC 204508 / S288c) (Baker's yeast).